The sequence spans 287 residues: Lipoyl synthase (287 aa).

[4Fe-4S] cluster-binding residues include cysteine 34, cysteine 39, cysteine 45, cysteine 60, cysteine 64, cysteine 67, and serine 273. The region spanning 46 to 262 (WNKRHATVMI…KYIAYSKGFL (217 aa)) is the Radical SAM core domain.

It belongs to the radical SAM superfamily. Lipoyl synthase family. It depends on [4Fe-4S] cluster as a cofactor.

The protein localises to the cytoplasm. The enzyme catalyses [[Fe-S] cluster scaffold protein carrying a second [4Fe-4S](2+) cluster] + N(6)-octanoyl-L-lysyl-[protein] + 2 oxidized [2Fe-2S]-[ferredoxin] + 2 S-adenosyl-L-methionine + 4 H(+) = [[Fe-S] cluster scaffold protein] + N(6)-[(R)-dihydrolipoyl]-L-lysyl-[protein] + 4 Fe(3+) + 2 hydrogen sulfide + 2 5'-deoxyadenosine + 2 L-methionine + 2 reduced [2Fe-2S]-[ferredoxin]. Its pathway is protein modification; protein lipoylation via endogenous pathway; protein N(6)-(lipoyl)lysine from octanoyl-[acyl-carrier-protein]: step 2/2. Catalyzes the radical-mediated insertion of two sulfur atoms into the C-6 and C-8 positions of the octanoyl moiety bound to the lipoyl domains of lipoate-dependent enzymes, thereby converting the octanoylated domains into lipoylated derivatives. In Wolbachia sp. subsp. Brugia malayi (strain TRS), this protein is Lipoyl synthase.